The following is a 408-amino-acid chain: RUN domain-containing protein 3B (408 aa).

Positions 1–25 are disordered; sequence MASRSLGGLSGSRGGGGGGGGKKSL. Residues 8 to 22 are compositionally biased toward gly residues; it reads GLSGSRGGGGGGGGK. R13 bears the Omega-N-methylarginine mark. Residues 58–190 form the RUN domain; that stretch reads DDSSPEFNNF…IDFSFCLKGE (133 aa). Positions 213 to 238 are disordered; that stretch reads DSISSDEEELRTFGSSDSESSTPENV. Phosphoserine is present on residues S216 and S217. Over residues 225–236 the composition is skewed to polar residues; that stretch reads FGSSDSESSTPE. The stretch at 301-326 forms a coiled coil; that stretch reads AHKLEKEQLEYIIVELQDQLKSYQSL. The segment at 337–359 is disordered; that stretch reads QASLDPSHSQEGDGKQDSLNFIG.

The protein belongs to the RUNDC3 family. Interacts with RAP2A.

This Mus musculus (Mouse) protein is RUN domain-containing protein 3B (Rundc3b).